The primary structure comprises 165 residues: C-phycoerythrin class 2 subunit alpha (165 aa).

Phycourobilin-binding residues include C75, C83, and C140.

The protein belongs to the phycobiliprotein family. As to quaternary structure, heterodimer of an alpha and a beta chain. Contains three covalently linked phycourobilin chromophores.

The protein localises to the cellular thylakoid membrane. Its function is as follows. Light-harvesting photosynthetic bile pigment-protein from the phycobiliprotein complex. This chain is C-phycoerythrin class 2 subunit alpha (mpeA), found in Synechococcus sp. (strain WH8103).